A 359-amino-acid polypeptide reads, in one-letter code: Peptide chain release factor 1 (359 aa).

Q236 is modified (N5-methylglutamine).

The protein belongs to the prokaryotic/mitochondrial release factor family. Post-translationally, methylated by PrmC. Methylation increases the termination efficiency of RF1.

It is found in the cytoplasm. Its function is as follows. Peptide chain release factor 1 directs the termination of translation in response to the peptide chain termination codons UAG and UAA. The polypeptide is Peptide chain release factor 1 (Streptococcus mutans serotype c (strain ATCC 700610 / UA159)).